A 103-amino-acid chain; its full sequence is Large ribosomal subunit protein bL21 (103 aa).

Belongs to the bacterial ribosomal protein bL21 family. As to quaternary structure, part of the 50S ribosomal subunit. Contacts protein L20.

In terms of biological role, this protein binds to 23S rRNA in the presence of protein L20. The protein is Large ribosomal subunit protein bL21 of Treponema denticola (strain ATCC 35405 / DSM 14222 / CIP 103919 / JCM 8153 / KCTC 15104).